The chain runs to 181 residues: CDP-diacylglycerol--glycerol-3-phosphate 3-phosphatidyltransferase (181 aa).

4 helical membrane passes run P8–I28, M35–A55, F64–L84, and I148–I168.

It belongs to the CDP-alcohol phosphatidyltransferase class-I family.

It localises to the cell membrane. It catalyses the reaction a CDP-1,2-diacyl-sn-glycerol + sn-glycerol 3-phosphate = a 1,2-diacyl-sn-glycero-3-phospho-(1'-sn-glycero-3'-phosphate) + CMP + H(+). Its pathway is phospholipid metabolism; phosphatidylglycerol biosynthesis; phosphatidylglycerol from CDP-diacylglycerol: step 1/2. Its function is as follows. This protein catalyzes the committed step to the synthesis of the acidic phospholipids. This Rickettsia bellii (strain RML369-C) protein is CDP-diacylglycerol--glycerol-3-phosphate 3-phosphatidyltransferase (pgsA).